An 87-amino-acid chain; its full sequence is Small ribosomal subunit protein uS17 (87 aa).

This sequence belongs to the universal ribosomal protein uS17 family. As to quaternary structure, part of the 30S ribosomal subunit.

One of the primary rRNA binding proteins, it binds specifically to the 5'-end of 16S ribosomal RNA. The sequence is that of Small ribosomal subunit protein uS17 from Geobacillus kaustophilus (strain HTA426).